Reading from the N-terminus, the 405-residue chain is S-adenosylmethionine synthase (405 aa).

Position 141-146 (141-146 (GQGSVD)) interacts with ATP.

The protein belongs to the AdoMet synthase 2 family. Mg(2+) serves as cofactor.

It catalyses the reaction L-methionine + ATP + H2O = S-adenosyl-L-methionine + phosphate + diphosphate. Its pathway is amino-acid biosynthesis; S-adenosyl-L-methionine biosynthesis; S-adenosyl-L-methionine from L-methionine: step 1/1. Functionally, catalyzes the formation of S-adenosylmethionine from methionine and ATP. The protein is S-adenosylmethionine synthase of Methanococcus maripaludis (strain C7 / ATCC BAA-1331).